The sequence spans 176 residues: Glutathione-regulated potassium-efflux system ancillary protein KefF (176 aa).

FMN-binding positions include histidine 8, 14 to 17 (SHAN), 65 to 68 (MQWY), and 105 to 108 (TTGG).

This sequence belongs to the NAD(P)H dehydrogenase (quinone) family. KefF subfamily. As to quaternary structure, homodimer. Interacts with KefC. FMN is required as a cofactor.

Its subcellular location is the cell inner membrane. The enzyme catalyses a quinone + NADH + H(+) = a quinol + NAD(+). It catalyses the reaction a quinone + NADPH + H(+) = a quinol + NADP(+). Its function is as follows. Regulatory subunit of a potassium efflux system that confers protection against electrophiles. Required for full activity of KefC. Shows redox enzymatic activity, but this enzymatic activity is not required for activation of KefC. The protein is Glutathione-regulated potassium-efflux system ancillary protein KefF of Salmonella gallinarum (strain 287/91 / NCTC 13346).